We begin with the raw amino-acid sequence, 249 residues long: tRNA pseudouridine synthase A (249 aa).

The Nucleophile role is filled by Asp-52. Tyr-111 is a binding site for substrate.

This sequence belongs to the tRNA pseudouridine synthase TruA family. As to quaternary structure, homodimer.

The catalysed reaction is uridine(38/39/40) in tRNA = pseudouridine(38/39/40) in tRNA. Functionally, formation of pseudouridine at positions 38, 39 and 40 in the anticodon stem and loop of transfer RNAs. This is tRNA pseudouridine synthase A from Brachyspira hyodysenteriae (strain ATCC 49526 / WA1).